A 373-amino-acid polypeptide reads, in one-letter code: Probable pectin lyase C (373 aa).

A signal peptide spans 1–17; the sequence is MKKYLLSLLAAVTYTTA. 2 cysteine pairs are disulfide-bonded: Cys-78–Cys-95 and Cys-87–Cys-215. 2 N-linked (GlcNAc...) asparagine glycosylation sites follow: Asn-140 and Asn-229. Arg-245 is a catalytic residue. The cysteines at positions 315 and 323 are disulfide-linked.

Belongs to the polysaccharide lyase 1 family.

Its subcellular location is the secreted. The enzyme catalyses Eliminative cleavage of (1-&gt;4)-alpha-D-galacturonan methyl ester to give oligosaccharides with 4-deoxy-6-O-methyl-alpha-D-galact-4-enuronosyl groups at their non-reducing ends.. In terms of biological role, pectinolytic enzymes consist of four classes of enzymes: pectin lyase, polygalacturonase, pectin methylesterase and rhamnogalacturonase. Among pectinolytic enzymes, pectin lyase is the most important in depolymerization of pectin, since it cleaves internal glycosidic bonds of highly methylated pectins. This Emericella nidulans (strain FGSC A4 / ATCC 38163 / CBS 112.46 / NRRL 194 / M139) (Aspergillus nidulans) protein is Probable pectin lyase C (pelC).